A 633-amino-acid chain; its full sequence is uncharacterized protein (633 aa).

The segment at 1 to 188 is disordered; the sequence is MNNRGGFSHP…GQSSFYNSSY (188 aa). 2 stretches are compositionally biased toward low complexity: residues 32 to 80 and 104 to 148; these read GQPQ…GGNN and NNGN…TNSR. Gly residues predominate over residues 152–178; it reads RGGSSRGGSSRGGNSGSSRGGSRGGYR. The stretch at 580–607 forms a coiled coil; it reads KSKNWTVDQASDELKKLSKNLRLLVSKH. A disordered region spans residues 611-633; it reads TKFQPPSADHTTQFEQDDEEEEN.

This is an uncharacterized protein from Dictyostelium discoideum (Social amoeba).